Reading from the N-terminus, the 433-residue chain is MEVVDPQQLGMFTEGELMSVGMDTFIHRIDSTEVIYQPRRKRAKLIGKYLMGDLLGEGSYGKVKEVLDSETLCRRAVKILKKKKLRRIPNGEANVKKEIQLLRRLRHKNVIQLVDVLYNEEKQKMYMVMEYCVCGMQEMLDSVPEKRFPVCQAHGYFCQLIDGLEYLHSQGIVHKDIKPGNLLLTTGGTLKISDLGVAEALHPFAADDTCRTSQGSPAFQPPEIANGLDTFSGFKVDIWSAGVTLYNITTGLYPFEGDNIYKLFENIGKGSYAIPGDCGPPLSDLLKGMLEYEPAKRFSIRQIRQHSWFRKKHPPAEAPVPIPPSPDTKDRWRSMTVVPYLEDLHGADEDEDLFDIEDDIIYTQDFTVPGQVPEEEASHNGQRRGLPKAVCMNGTEAAQLSTKSRAEGRAPNPARKACSASSKIRRLSACKQQ.

Ser31 carries the phosphoserine modification. Residues Lys44 and Lys48 each carry the N6-acetyllysine modification. Residues 45-90 are sufficient for interaction with SIRT1; it reads LIGKYLMGDLLGEGSYGKVKEVLDSETLCRRAVKILKKKKLRRIPN. Residues 49-309 form the Protein kinase domain; that stretch reads YLMGDLLGEG…IRQIRQHSWF (261 aa). ATP-binding positions include 55 to 63 and Lys78; that span reads LGEGSYGKV. Lys96 and Lys97 each carry N6-acetyllysine. Asp176 (proton acceptor) is an active-site residue. Thr189 bears the Phosphothreonine; by autocatalysis mark. 2 positions are modified to N6-acetyllysine: Lys296 and Lys311. The segment at 312–331 is disordered; that stretch reads KHPPAEAPVPIPPSPDTKDR. Pro residues predominate over residues 316–326; the sequence is AEAPVPIPPSP. The residue at position 325 (Ser325) is a Phosphoserine. Thr336 carries the phosphothreonine; by autocatalysis modification. Residue Thr363 is modified to Phosphothreonine; by ATM and autocatalysis. The interval 397–433 is disordered; the sequence is AAQLSTKSRAEGRAPNPARKACSASSKIRRLSACKQQ. Phosphoserine occurs at positions 399 and 401. An N6-acetyllysine modification is found at Lys416. Cys418 is lipidated: S-palmitoyl cysteine. Lys423 carries the N6-acetyllysine modification. Residues 423–433 show a composition bias toward basic residues; the sequence is KIRRLSACKQQ. Ser428 is subject to Phosphoserine; by autocatalysis, PKA, PKC/PRKCZ and RPS6KA1. The residue at position 430 (Cys430) is a Cysteine methyl ester. Cys430 is lipidated: S-farnesyl cysteine. An N6-acetyllysine modification is found at Lys431. Residues 431–433 constitute a propeptide, removed in mature form; that stretch reads KQQ.

This sequence belongs to the protein kinase superfamily. CAMK Ser/Thr protein kinase family. LKB1 subfamily. In terms of assembly, catalytic component of a trimeric complex composed of STK11/LKB1, STRAD (STRADA or STRADB) and CAB39/MO25 (CAB39/MO25alpha or CAB39L/MO25beta): the complex tethers STK11/LKB1 in the cytoplasm and stimulates its catalytic activity. Found in a ternary complex composed of SMAD4, STK11/LKB1 and STK11IP. Interacts with p53/TP53, SMAD4, STK11IP and WDR6. Interacts with NR4A1. Interacts with NISCH; this interaction may increase STK11 activity. Interacts with PTEN; leading to PTEN phosphorylation. Interacts with SIRT1; the interaction deacetylates STK11. Interacts with CDKN1A. It depends on Mg(2+) as a cofactor. Mn(2+) serves as cofactor. Post-translationally, phosphorylated by ATM at Thr-363 following ionizing radiation (IR). Phosphorylation at Ser-428 by RPS6KA1 and/or some PKA is required to inhibit cell growth. Phosphorylation at Ser-428 is also required during neuronal polarization to mediate phosphorylation of BRSK1 and BRSK2. Phosphorylation by PKC/PRKCZ at Ser-399 in isoform 2 promotes metformin (or peroxynitrite)-induced nuclear export of STK11 and activation of AMPK. UV radiation-induced phosphorylation at Thr-363 mediates CDKN1A degradation. In terms of processing, acetylated. Deacetylation at Lys-48 enhances cytoplasmic localization and kinase activity in vitro. As to expression, ubiquitously expressed. Strongest expression in testis and fetal liver.

It localises to the nucleus. The protein resides in the cytoplasm. Its subcellular location is the membrane. It is found in the mitochondrion. It catalyses the reaction L-seryl-[protein] + ATP = O-phospho-L-seryl-[protein] + ADP + H(+). The enzyme catalyses L-threonyl-[protein] + ATP = O-phospho-L-threonyl-[protein] + ADP + H(+). Activated by forming a complex with STRAD (STRADA or STRADB) and CAB39/MO25 (CAB39/MO25alpha or CAB39L/MO25beta): STRADA (or STRADB)-binding promotes a conformational change of STK11/LKB1 in an active conformation, which is stabilized by CAB39/MO25alpha (or CAB39L/MO25beta) interacting with the STK11/LKB1 activation loop. Sequestration in the nucleus by NR4A1 prevents it from phosphorylating and activating cytoplasmic AMPK. Functionally, tumor suppressor serine/threonine-protein kinase that controls the activity of AMP-activated protein kinase (AMPK) family members, thereby playing a role in various processes such as cell metabolism, cell polarity, apoptosis and DNA damage response. Acts by phosphorylating the T-loop of AMPK family proteins, thus promoting their activity: phosphorylates PRKAA1, PRKAA2, BRSK1, BRSK2, MARK1, MARK2, MARK3, MARK4, NUAK1, NUAK2, SIK1, SIK2, SIK3 and SNRK but not MELK. Also phosphorylates non-AMPK family proteins such as STRADA, PTEN and possibly p53/TP53. Acts as a key upstream regulator of AMPK by mediating phosphorylation and activation of AMPK catalytic subunits PRKAA1 and PRKAA2 and thereby regulates processes including: inhibition of signaling pathways that promote cell growth and proliferation when energy levels are low, glucose homeostasis in liver, activation of autophagy when cells undergo nutrient deprivation, and B-cell differentiation in the germinal center in response to DNA damage. Also acts as a regulator of cellular polarity by remodeling the actin cytoskeleton. Required for cortical neuron polarization by mediating phosphorylation and activation of BRSK1 and BRSK2, leading to axon initiation and specification. Involved in DNA damage response: interacts with p53/TP53 and recruited to the CDKN1A/WAF1 promoter to participate in transcription activation. Able to phosphorylate p53/TP53; the relevance of such result in vivo is however unclear and phosphorylation may be indirect and mediated by downstream STK11/LKB1 kinase NUAK1. Also acts as a mediator of p53/TP53-dependent apoptosis via interaction with p53/TP53: translocates to the mitochondrion during apoptosis and regulates p53/TP53-dependent apoptosis pathways. Regulates UV radiation-induced DNA damage response mediated by CDKN1A. In association with NUAK1, phosphorylates CDKN1A in response to UV radiation and contributes to its degradation which is necessary for optimal DNA repair. In terms of biological role, has a role in spermiogenesis. The protein is Serine/threonine-protein kinase STK11 of Homo sapiens (Human).